We begin with the raw amino-acid sequence, 378 residues long: Queuine tRNA-ribosyltransferase (378 aa).

The Proton acceptor role is filled by aspartate 92. Substrate contacts are provided by residues 92-96 (DSGGF), aspartate 146, glutamine 188, and glycine 215. An RNA binding region spans residues 246–252 (GVGTHLE). Aspartate 265 functions as the Nucleophile in the catalytic mechanism. An RNA binding; important for wobble base 34 recognition region spans residues 270 to 274 (TRLAR). Positions 303, 305, 308, and 334 each coordinate Zn(2+).

It belongs to the queuine tRNA-ribosyltransferase family. In terms of assembly, homodimer. Within each dimer, one monomer is responsible for RNA recognition and catalysis, while the other monomer binds to the replacement base PreQ1. Zn(2+) is required as a cofactor.

It catalyses the reaction 7-aminomethyl-7-carbaguanine + guanosine(34) in tRNA = 7-aminomethyl-7-carbaguanosine(34) in tRNA + guanine. The protein operates within tRNA modification; tRNA-queuosine biosynthesis. Functionally, catalyzes the base-exchange of a guanine (G) residue with the queuine precursor 7-aminomethyl-7-deazaguanine (PreQ1) at position 34 (anticodon wobble position) in tRNAs with GU(N) anticodons (tRNA-Asp, -Asn, -His and -Tyr). Catalysis occurs through a double-displacement mechanism. The nucleophile active site attacks the C1' of nucleotide 34 to detach the guanine base from the RNA, forming a covalent enzyme-RNA intermediate. The proton acceptor active site deprotonates the incoming PreQ1, allowing a nucleophilic attack on the C1' of the ribose to form the product. After dissociation, two additional enzymatic reactions on the tRNA convert PreQ1 to queuine (Q), resulting in the hypermodified nucleoside queuosine (7-(((4,5-cis-dihydroxy-2-cyclopenten-1-yl)amino)methyl)-7-deazaguanosine). The chain is Queuine tRNA-ribosyltransferase from Thermosynechococcus vestitus (strain NIES-2133 / IAM M-273 / BP-1).